Consider the following 712-residue polypeptide: 1,4-alpha-glucan branching enzyme GlgB (712 aa).

The active-site Nucleophile is aspartate 397. Glutamate 450 serves as the catalytic Proton donor.

It belongs to the glycosyl hydrolase 13 family. GlgB subfamily. As to quaternary structure, monomer.

The catalysed reaction is Transfers a segment of a (1-&gt;4)-alpha-D-glucan chain to a primary hydroxy group in a similar glucan chain.. It functions in the pathway glycan biosynthesis; glycogen biosynthesis. Catalyzes the formation of the alpha-1,6-glucosidic linkages in glycogen by scission of a 1,4-alpha-linked oligosaccharide from growing alpha-1,4-glucan chains and the subsequent attachment of the oligosaccharide to the alpha-1,6 position. This chain is 1,4-alpha-glucan branching enzyme GlgB, found in Bradyrhizobium sp. (strain ORS 278).